We begin with the raw amino-acid sequence, 284 residues long: 16S rRNA (guanine(1405)-N(7))-methyltransferase (284 aa).

S-adenosyl-L-methionine-binding positions include tyrosine 73, 111–113 (HAS), arginine 117, alanine 142, aspartate 165, 191–192 (DL), leucine 208, and glutamine 217.

The protein belongs to the methyltransferase superfamily. Aminoglycoside resistance family.

The enzyme catalyses guanosine(1405) in 16S rRNA + S-adenosyl-L-methionine = N(7)-methylguanosine(1405) in 16S rRNA + S-adenosyl-L-homocysteine. Its function is as follows. Specifically methylates the N(7) position of guanine 1405 in 16S rRNA. Confers resistance to various aminoglycosides, including gentamicin and kanamycin. This Frankia casuarinae (strain DSM 45818 / CECT 9043 / HFP020203 / CcI3) protein is 16S rRNA (guanine(1405)-N(7))-methyltransferase (Krm).